The sequence spans 300 residues: CDP-diacylglycerol--serine O-phosphatidyltransferase (300 aa).

The next 6 membrane-spanning stretches (helical) occupy residues 10–30 (AVNLQILPSSMTVLSICAGLT), 74–94 (IDSLADAVNFGVAPAVVLYAT), 95–115 (MLSTTPVGWVAVLLYPVCVVL), 135–155 (EFFVGMPAPAGAVSVIGLLAL), 162–182 (GWWTSTWFLCIWVTGTSMLLI), and 207–227 (LAIFAAAVVLAPYLLIWVIIL).

It belongs to the CDP-alcohol phosphatidyltransferase class-I family.

The protein resides in the cell membrane. It carries out the reaction a CDP-1,2-diacyl-sn-glycerol + L-serine = a 1,2-diacyl-sn-glycero-3-phospho-L-serine + CMP + H(+). In Mycobacterium leprae (strain TN), this protein is CDP-diacylglycerol--serine O-phosphatidyltransferase (pssA).